The sequence spans 372 residues: MSNQHTLLSSNLLPVGSNISTWWNFGSMLLTCLALQISTGFFLAIHYTANINLAFSSVTHIMRDVPYGWTMQNLHAIGASMFFICIYIHIARGLYYGLYLNKEVWLSGTVLLITLMATAFFGYVLPWGQMSFWAATVITNLLTAIPYLGTTLTTWLWGGFSINDPTLTRFFALHFILPFLIVSLSSIHIILLHNEGSNNPLGTNPDIDKIPFHPYHSYKDILMITVMITTLFSIMAFAPNLFNDPENFSKANPLVTPQHIKPEWYFLFAYGILRSIPNKLGGTLALLMSVIILTTAPFTHTSHIRSMAFRPLAQMLFWTLIATFITITWTATKPVEPPFILISQMASIIYFSFFIINPILGWVENKISMTNS.

Helical transmembrane passes span 25–45, 69–90, 105–125, and 170–190; these read FGSM…FLAI, WTMQ…YIHI, WLSG…GYVL, and FFAL…IHII. Residues His75 and His89 each coordinate heme b. Heme b contacts are provided by His174 and His188. Residue His193 coordinates a ubiquinone. The next 4 membrane-spanning stretches (helical) occupy residues 218-238, 280-300, 312-332, and 339-358; these read YKDI…MAFA, LGGT…PFTH, LAQM…WTAT, and FILI…IINP.

This sequence belongs to the cytochrome b family. As to quaternary structure, the cytochrome bc1 complex contains 3 respiratory subunits (MT-CYB, CYC1 and UQCRFS1), 2 core proteins (UQCRC1 and UQCRC2) and probably 6 low-molecular weight proteins. The cofactor is heme b.

The protein localises to the mitochondrion inner membrane. In terms of biological role, component of the ubiquinol-cytochrome c reductase complex (complex III or cytochrome b-c1 complex) that is part of the mitochondrial respiratory chain. The b-c1 complex mediates electron transfer from ubiquinol to cytochrome c. Contributes to the generation of a proton gradient across the mitochondrial membrane that is then used for ATP synthesis. This is Cytochrome b (MT-CYB) from Acanthophis antarcticus (Common death adder).